The following is a 391-amino-acid chain: Chalcone synthase 2 (391 aa).

Cys164 is an active-site residue.

Belongs to the thiolase-like superfamily. Chalcone/stilbene synthases family.

The enzyme catalyses (E)-4-coumaroyl-CoA + 3 malonyl-CoA + 3 H(+) = 2',4,4',6'-tetrahydroxychalcone + 3 CO2 + 4 CoA. It functions in the pathway secondary metabolite biosynthesis; flavonoid biosynthesis. Its function is as follows. The primary product of this enzyme is 4,2',4',6'-tetrahydroxychalcone (also termed naringenin-chalcone or chalcone) which can under specific conditions spontaneously isomerize into naringenin. The chain is Chalcone synthase 2 (CHS2) from Citrus sinensis (Sweet orange).